The primary structure comprises 265 residues: Transcriptional repressor DcmR (265 aa).

A DNA-binding region (H-T-H motif) is located at residues 17–36; sequence LDIKQAASLLNVSEASLRRW.

In terms of assembly, monomer.

In terms of biological role, transcriptional repressor of the dcmA gene and of its own gene. This Methylorubrum extorquens (strain DSM 6343 / CIP 106787 / DM4) (Methylobacterium extorquens) protein is Transcriptional repressor DcmR (dcmR).